Reading from the N-terminus, the 200-residue chain is 3-isopropylmalate dehydratase small subunit (200 aa).

It belongs to the LeuD family. LeuD type 1 subfamily. As to quaternary structure, heterodimer of LeuC and LeuD.

It carries out the reaction (2R,3S)-3-isopropylmalate = (2S)-2-isopropylmalate. The protein operates within amino-acid biosynthesis; L-leucine biosynthesis; L-leucine from 3-methyl-2-oxobutanoate: step 2/4. In terms of biological role, catalyzes the isomerization between 2-isopropylmalate and 3-isopropylmalate, via the formation of 2-isopropylmaleate. The sequence is that of 3-isopropylmalate dehydratase small subunit from Aliivibrio salmonicida (strain LFI1238) (Vibrio salmonicida (strain LFI1238)).